The chain runs to 179 residues: Ribosomal RNA small subunit methyltransferase G (179 aa).

S-adenosyl-L-methionine is bound by residues Gly54, Phe59, 105–106 (IE), and Arg121.

This sequence belongs to the methyltransferase superfamily. RNA methyltransferase RsmG family.

The protein localises to the cytoplasm. The enzyme catalyses guanosine(527) in 16S rRNA + S-adenosyl-L-methionine = N(7)-methylguanosine(527) in 16S rRNA + S-adenosyl-L-homocysteine. In terms of biological role, specifically methylates the N7 position of guanine in position 527 of 16S rRNA. The protein is Ribosomal RNA small subunit methyltransferase G of Helicobacter bizzozeronii.